The primary structure comprises 498 residues: ATP synthase subunit beta, chloroplastic (498 aa).

Gly-172–Thr-179 lines the ATP pocket.

This sequence belongs to the ATPase alpha/beta chains family. In terms of assembly, F-type ATPases have 2 components, CF(1) - the catalytic core - and CF(0) - the membrane proton channel. CF(1) has five subunits: alpha(3), beta(3), gamma(1), delta(1), epsilon(1). CF(0) has four main subunits: a(1), b(1), b'(1) and c(9-12).

It localises to the plastid. The protein resides in the chloroplast thylakoid membrane. The enzyme catalyses ATP + H2O + 4 H(+)(in) = ADP + phosphate + 5 H(+)(out). Its function is as follows. Produces ATP from ADP in the presence of a proton gradient across the membrane. The catalytic sites are hosted primarily by the beta subunits. The chain is ATP synthase subunit beta, chloroplastic from Nicotiana rustica (Aztec tobacco).